We begin with the raw amino-acid sequence, 154 residues long: Superoxide dismutase [Cu-Zn] (154 aa).

3 residues coordinate Cu cation: His-47, His-49, and His-64. The cysteines at positions 58 and 147 are disulfide-linked. Positions 64, 72, 81, and 84 each coordinate Zn(2+). His-121 provides a ligand contact to Cu cation. Arg-144 contacts substrate.

This sequence belongs to the Cu-Zn superoxide dismutase family. Homodimer. Cu cation serves as cofactor. The cofactor is Zn(2+).

It is found in the cytoplasm. The catalysed reaction is 2 superoxide + 2 H(+) = H2O2 + O2. In terms of biological role, destroys radicals which are normally produced within the cells and which are toxic to biological systems. The sequence is that of Superoxide dismutase [Cu-Zn] (SOD1) from Claviceps purpurea (strain 20.1) (Ergot fungus).